A 453-amino-acid chain; its full sequence is Ribosomal protein uS12 methylthiotransferase RimO (453 aa).

One can recognise an MTTase N-terminal domain in the interval 5-120 (PKVGFVSLGC…VMQAVHSHLP (116 aa)). [4Fe-4S] cluster-binding residues include cysteine 14, cysteine 50, cysteine 79, cysteine 151, cysteine 155, and cysteine 158. The Radical SAM core domain maps to 137 to 382 (LTPRHYAYLK…MEVAEEVSAN (246 aa)). The TRAM domain occupies 385-453 (QRKVGKTLKV…ADGHDLWGEV (69 aa)).

The protein belongs to the methylthiotransferase family. RimO subfamily. [4Fe-4S] cluster is required as a cofactor.

Its subcellular location is the cytoplasm. The enzyme catalyses L-aspartate(89)-[ribosomal protein uS12]-hydrogen + (sulfur carrier)-SH + AH2 + 2 S-adenosyl-L-methionine = 3-methylsulfanyl-L-aspartate(89)-[ribosomal protein uS12]-hydrogen + (sulfur carrier)-H + 5'-deoxyadenosine + L-methionine + A + S-adenosyl-L-homocysteine + 2 H(+). Functionally, catalyzes the methylthiolation of an aspartic acid residue of ribosomal protein uS12. This Burkholderia lata (strain ATCC 17760 / DSM 23089 / LMG 22485 / NCIMB 9086 / R18194 / 383) protein is Ribosomal protein uS12 methylthiotransferase RimO.